Reading from the N-terminus, the 458-residue chain is MGALGRALLWLQLCALARAAYKLWVPTTDFEAAANWSQNRTPCAGAVVQFPADKAVSVVVRASHGFSDMLLPRDGEFVLASGAGFGAADAGRDPDCGAGAPALFLDPDRFSWHDPRLWRSGDAARGLFSVDAERVPCRHDDVVFPPDASFRVGLGPGARPARVRSVQVLGQTFTRDEDLAAFLASRAGRLRFHGPGALRVGPGACADPSGCVCGDAEVQPWICAALLQPLGGRCPPAACPDALRPEGQCCDLCGAIVSLTHGPTFDIERYRARLLRAFLPQYPGLQAAVSKVRRRPGPHTEVQVVLAETGPQPGGAGRLARALLADVAEHGEALGVLSATARESGAPVGDGSAAGPLGSGSRAGLAGGVAAGLLLLLLALAAGLLLLRRAPRLRWTKRERLVATPVEAPLGFSNPVFDVAGSVGPVPRTPQPPPAQQAGSSSTSRSYFVNPLFAEAEA.

The N-terminal stretch at 1–19 is a signal peptide; it reads MGALGRALLWLQLCALARA. Over 20–366 the chain is Extracellular; that stretch reads AYKLWVPTTD…LGSGSRAGLA (347 aa). Residue Asn35 is glycosylated (N-linked (GlcNAc...) asparagine). 6 cysteine pairs are disulfide-bonded: Cys43/Cys96, Cys137/Cys213, Cys205/Cys211, Cys223/Cys249, Cys234/Cys250, and Cys239/Cys253. Positions 67-87 are interaction with CUBN; the sequence is SDMLLPRDGEFVLASGAGFGA. Residues 203-254 form the VWFC domain; the sequence is GACADPSGCVCGDAEVQPWICAALLQPLGGRCPPAACPDALRPEGQCCDLCG. A helical membrane pass occupies residues 367 to 387; that stretch reads GGVAAGLLLLLLALAAGLLLL. The Cytoplasmic portion of the chain corresponds to 388 to 458; it reads RRAPRLRWTK…VNPLFAEAEA (71 aa). Residues 422–446 are disordered; it reads SVGPVPRTPQPPPAQQAGSSSTSRS.

As to quaternary structure, interacts (via extracellular region) with CUBN/cubilin. This gives rise to a huge complex containing one AMN chain and three CUBN chains. Post-translationally, N-glycosylated. In terms of processing, a soluble form arises by proteolytic removal of the membrane anchor. Detected in kidney (at protein level). Detected in kidney and ileum.

It is found in the apical cell membrane. The protein localises to the cell membrane. Its subcellular location is the endosome membrane. The protein resides in the membrane. It localises to the coated pit. It is found in the secreted. Functionally, membrane-bound component of the endocytic receptor formed by AMN and CUBN. Required for normal CUBN glycosylation and trafficking to the cell surface. The complex formed by AMN and CUBN is required for efficient absorption of vitamin B12. Required for normal CUBN-mediated protein transport in the kidney. The chain is Protein amnionless (AMN) from Canis lupus familiaris (Dog).